The chain runs to 554 residues: GPI alpha-1,2-mannosyltransferase 3 (554 aa).

N26 is a glycosylation site (N-linked (GlcNAc...) asparagine). 9 helical membrane-spanning segments follow: residues 63-83, 136-156, 192-212, 224-244, 255-275, 315-335, 340-360, 362-382, and 387-407; these read LLLF…TSFV, VQLL…VADV, LTNT…PLEG, LVAL…PLLF, DLIL…SLMI, GFPV…YLAP, ILLV…HKEF, FIYP…THLK, and PALS…GLVH. N-linked (GlcNAc...) asparagine glycosylation is present at N427.

The protein belongs to the glycosyltransferase 22 family. PIGB subfamily.

It is found in the endoplasmic reticulum membrane. It functions in the pathway glycolipid biosynthesis; glycosylphosphatidylinositol-anchor biosynthesis. Alpha-1,2-mannosyltransferase that catalyzes the transfer of the third mannose, via an alpha-1,2 bond, from a dolichol-phosphate-mannose (Dol-P-Man) to an alpha-D-Man-(1-&gt;6)-2-PEtn-alpha-D-Man-(1-&gt;4)-alpha-D-GlcN-(1-&gt;6)-(1-radyl,2-acyl-sn-glycero-3-phospho)-2-acyl-inositol intermediate to generate an alpha-D-Man-(1-&gt;2)-alpha-D-Man-(1-&gt;6)-2-PEtn-alpha-D-Man-(1-&gt;4)-alpha-D-GlcN-(1-&gt;6)-(1-radyl,2-acyl-sn-glycero-3-phospho)-2-acyl-inositol (also termed H6) and participates in the nineth step of the glycosylphosphatidylinositol-anchor biosynthesis. May also add the third mannose to an alpha-D-Man-(1-&gt;6)-alpha-D-Man-(1-&gt;4)-alpha-D-GlcN-(1-&gt;6)-(1-radyl,2-acyl-sn-glycero-3-phospho)-2-acyl-inositol (also termed H3) intermediate generating an alpha-D-Man-(1-&gt;2)-alpha-D-Man-(1-&gt;6)-alpha-D-Man-(1-&gt;4)-alpha-D-GlcN-(1-&gt;6)-(1-radyl,2-acyl-sn-glycero-3-phospho)-2-acyl-inositol (also termed H4). The protein is GPI alpha-1,2-mannosyltransferase 3 of Homo sapiens (Human).